Here is a 133-residue protein sequence, read N- to C-terminus: Small ribosomal subunit protein uS8 (133 aa).

It belongs to the universal ribosomal protein uS8 family. Part of the 30S ribosomal subunit. Contacts proteins S5 and S12.

One of the primary rRNA binding proteins, it binds directly to 16S rRNA central domain where it helps coordinate assembly of the platform of the 30S subunit. This chain is Small ribosomal subunit protein uS8, found in Trichormus variabilis (strain ATCC 29413 / PCC 7937) (Anabaena variabilis).